A 440-amino-acid polypeptide reads, in one-letter code: MSSEQSHRLRKYNNLPVWVVEDHHDVLPFIYRAIGSKHLPVSNISFIHFDSHPDLLIPVNMPADTVFDKESLFSELSIENWIMPVVYAGHFSQVIWIHPCWAQQIKEGRHCFLVGKDKSTTTIRVTSTDDYFLSDGLYVPEEQLESPKSLHLDVILLEPIREQDWEYKEKGETVAKKIKLEESDQVVEGSSSGIQSSTSESSEDGLMKPTYLNASTKTSNETCTLDSNSNLAKNIIQILEKGTVYVLDIDLDFFSVKNPFKEMYTQDEYKILQELYSFKRPSVHSLEEELVDCVENRVHQLEDLEAAFADFCEDDSDETVQRWASNPGMNSLVQLVHSLKSRMEAPDYEMIHQAGLTCDYAELPHHVSTETEIEGLLQSVKNLLTCLPKPTLVTLARSSLDDYCPSEQVDYIQEKVLDVLRSLYGSLDVHLEFSPGSSSA.

The disordered stretch occupies residues 187-207 (VEGSSSGIQSSTSESSEDGLM). The segment covering 188 to 200 (EGSSSGIQSSTSE) has biased composition (low complexity).

Belongs to the UPF0489 family.

The chain is UPF0489 protein C5orf22 homolog from Xenopus tropicalis (Western clawed frog).